A 92-amino-acid chain; its full sequence is Small ribosomal subunit protein bS18 (92 aa).

The protein belongs to the bacterial ribosomal protein bS18 family. Part of the 30S ribosomal subunit. Forms a tight heterodimer with protein bS6.

Binds as a heterodimer with protein bS6 to the central domain of the 16S rRNA, where it helps stabilize the platform of the 30S subunit. This is Small ribosomal subunit protein bS18 from Chlorobium chlorochromatii (strain CaD3).